The following is a 371-amino-acid chain: Phospho-N-acetylmuramoyl-pentapeptide-transferase (371 aa).

Transmembrane regions (helical) follow at residues 19-39, 48-68, 95-115, 119-139, 155-175, 180-200, 227-247, 284-304, and 349-369; these read LYWL…IYSG, IVAP…WAVP, TMGG…WVAA, NLLE…VGWF, AKLR…WLFL, ISGL…FLAI, AIAF…LMIF, AVGL…LFLV, and VVST…GLNA.

This sequence belongs to the glycosyltransferase 4 family. MraY subfamily. It depends on Mg(2+) as a cofactor.

The protein localises to the cell inner membrane. It carries out the reaction UDP-N-acetyl-alpha-D-muramoyl-L-alanyl-gamma-D-glutamyl-meso-2,6-diaminopimeloyl-D-alanyl-D-alanine + di-trans,octa-cis-undecaprenyl phosphate = di-trans,octa-cis-undecaprenyl diphospho-N-acetyl-alpha-D-muramoyl-L-alanyl-D-glutamyl-meso-2,6-diaminopimeloyl-D-alanyl-D-alanine + UMP. It participates in cell wall biogenesis; peptidoglycan biosynthesis. Its function is as follows. Catalyzes the initial step of the lipid cycle reactions in the biosynthesis of the cell wall peptidoglycan: transfers peptidoglycan precursor phospho-MurNAc-pentapeptide from UDP-MurNAc-pentapeptide onto the lipid carrier undecaprenyl phosphate, yielding undecaprenyl-pyrophosphoryl-MurNAc-pentapeptide, known as lipid I. The sequence is that of Phospho-N-acetylmuramoyl-pentapeptide-transferase from Acaryochloris marina (strain MBIC 11017).